Here is a 218-residue protein sequence, read N- to C-terminus: Glycerol-3-phosphate acyltransferase (218 aa).

5 helical membrane-spanning segments follow: residues 5–25 (ALGM…ILIC), 53–73 (LAAA…VWLA), 80–100 (PFYL…PVFF), 115–135 (IAAI…LTVL), and 138–158 (GYSS…VWWF).

Belongs to the PlsY family. In terms of assembly, probably interacts with PlsX.

The protein resides in the cell inner membrane. The enzyme catalyses an acyl phosphate + sn-glycerol 3-phosphate = a 1-acyl-sn-glycero-3-phosphate + phosphate. It functions in the pathway lipid metabolism; phospholipid metabolism. Catalyzes the transfer of an acyl group from acyl-phosphate (acyl-PO(4)) to glycerol-3-phosphate (G3P) to form lysophosphatidic acid (LPA). This enzyme utilizes acyl-phosphate as fatty acyl donor, but not acyl-CoA or acyl-ACP. This chain is Glycerol-3-phosphate acyltransferase, found in Proteus mirabilis (strain HI4320).